The sequence spans 363 residues: G kinase-anchoring protein 1 (363 aa).

An interaction with IRS1 region spans residues 1–93; that stretch reads MASAVLSSVP…SHAICNAQHE (93 aa). Disordered stretches follow at residues 20-111 and 145-171; these read QVDS…NWQE and EYEN…HQGK. 3 positions are modified to phosphoserine: Ser-23, Ser-25, and Ser-27. Over residues 39 to 48 the composition is skewed to polar residues; it reads TGKSQTNKST. Positions 43–75 form a coiled coil; it reads QTNKSTTNEKKREKRRKKKEQQQSEANELRNLA. Basic and acidic residues predominate over residues 102–111; that stretch reads KDSREENWQE. Residue Ser-104 is modified to Phosphoserine; by PKG. Coiled coils occupy residues 126-158 and 240-350; these read ADLE…QSKV and EHNQ…YQGG.

Belongs to the GKAP1 family. As to quaternary structure, interacts with PRKG1 and IRS1.

The protein resides in the golgi apparatus. Its function is as follows. Regulates insulin-dependent IRS1 tyrosine phosphorylation in adipocytes by modulating the availability of IRS1 to IR tyrosine kinase. Its association with IRS1 is required for insulin-induced translocation of SLC2A4 to the cell membrane. Involved in TNF-induced impairment of insulin-dependent IRS1 tyrosine phosphorylation. The protein is G kinase-anchoring protein 1 (GKAP1) of Bos taurus (Bovine).